Consider the following 731-residue polypeptide: Catalase-peroxidase (731 aa).

Positions 98–227 form a cross-link, tryptophyl-tyrosyl-methioninium (Trp-Tyr) (with M-254); it reads WHAAGTYRTA…LAAIQMGLIY (130 aa). His99 (proton acceptor) is an active-site residue. The segment at residues 227–254 is a cross-link (tryptophyl-tyrosyl-methioninium (Tyr-Met) (with W-98)); the sequence is YVNPEGPQGNPHDDEGMARDMKETFKRM. Residue His269 coordinates heme b.

Belongs to the peroxidase family. Peroxidase/catalase subfamily. Homodimer or homotetramer. It depends on heme b as a cofactor. Post-translationally, formation of the three residue Trp-Tyr-Met cross-link is important for the catalase, but not the peroxidase activity of the enzyme.

The catalysed reaction is H2O2 + AH2 = A + 2 H2O. The enzyme catalyses 2 H2O2 = O2 + 2 H2O. In terms of biological role, bifunctional enzyme with both catalase and broad-spectrum peroxidase activity. The chain is Catalase-peroxidase from Sphingopyxis alaskensis (strain DSM 13593 / LMG 18877 / RB2256) (Sphingomonas alaskensis).